A 492-amino-acid polypeptide reads, in one-letter code: Cytoplasmic dynein 1 light intermediate chain 2 (492 aa).

Residue 61–68 (GEDGSGKT) coordinates ATP. Disordered regions lie at residues 187 to 206 (PEEG…SGSD), 371 to 423 (AKQP…KNNA), and 437 to 492 (LSKK…ENEA). Residue serine 194 is modified to Phosphoserine. Over residues 371–381 (AKQPATPTRAS) the composition is skewed to polar residues. Residues serine 383 and serine 391 each carry the phosphoserine modification. Arginine 397 bears the Omega-N-methylarginine mark. Residues 400–412 (PASVPSSSPGTSV) show a composition bias toward low complexity. At threonine 441 the chain carries Phosphothreonine. Phosphoserine is present on residues serine 443 and serine 446. Residues 452-469 (VQSTAKKSGQKTVLSNVQ) show a composition bias toward polar residues. Residues 471 to 480 (ELDRMTRKPD) are compositionally biased toward basic and acidic residues. Residues 482–492 (MVTNSSTENEA) are compositionally biased toward polar residues.

This sequence belongs to the dynein light intermediate chain family. Homodimer. The cytoplasmic dynein 1 complex consists of two catalytic heavy chains (HCs) and a number of non-catalytic subunits presented by intermediate chains (ICs), light intermediate chains (LICs) and light chains (LCs); the composition seems to vary in respect to the IC, LIC and LC composition. The heavy chain homodimer serves as a scaffold for the probable homodimeric assembly of the respective non-catalytic subunits. The ICs and LICs bind directly to the HC dimer and the LCs assemble on the IC dimer. Interacts with DYNC1H1; DYNC1LI1 and DYNC1LI2 bind mutually exclusive to DYNC1H.

The protein localises to the cytoplasm. It is found in the cytoskeleton. Acts as one of several non-catalytic accessory components of the cytoplasmic dynein 1 complex that are thought to be involved in linking dynein to cargos and to adapter proteins that regulate dynein function. Cytoplasmic dynein 1 acts as a motor for the intracellular retrograde motility of vesicles and organelles along microtubules. May play a role in binding dynein to membranous organelles or chromosomes. This Homo sapiens (Human) protein is Cytoplasmic dynein 1 light intermediate chain 2.